Here is a 608-residue protein sequence, read N- to C-terminus: Fatty acid amide hydrolase (608 aa).

Residues Lys206 and Ser282 each act as charge relay system in the active site. Position 303-306 (303-306) interacts with substrate; it reads GGGS. Ser306 acts as the Acyl-ester intermediate in catalysis.

The protein belongs to the amidase family. Forms homodimers.

It is found in the endoplasmic reticulum membrane. Its subcellular location is the cell membrane. It catalyses the reaction N-(9Z,12Z-octadecadienoyl)-ethanolamine + H2O = ethanolamine + (9Z,12Z)-octadecadienoate. It carries out the reaction N-hexadecanoylethanolamine + H2O = ethanolamine + hexadecanoate. The enzyme catalyses N-dodecanoylethanolamine + H2O = dodecanoate + ethanolamine. Its activity is regulated as follows. Inhibited by methyl arachidonyl fluorophosphonate (MAFP). In terms of biological role, catalyzes the hydrolysis of bioactive endogenous fatty acid amides to their corresponding acids. The hydrolysis of endogenous amidated lipids terminates their participation as lipid mediators in various signaling systems. Converts a wide range of N-acylethanolamines (NAEs) to their corresponding free fatty acids and ethanolamine. The polypeptide is Fatty acid amide hydrolase (Oryza sativa subsp. japonica (Rice)).